Reading from the N-terminus, the 429-residue chain is MDRIHITGGTPLNGTIPISGAKNAALPLMIASLLTGETLELINVPRLADIAALTRILGNHGVDHMVVGKRPGQTAETGQTVRLTASNVIDTTAPYELVSTMRASFWVIAPLLARFGEAKVSLPGGCAIGTRPVNLLIMALEKLGAEIEIDGGYVVAKTKNGLRGAEIVFPSVTVGGTHVALMAAALAYGTTVIDNAAREPEVVDLAECLIKMGARIEGAGTSRIVVEGVARLGGTRHEVLPDRIETGTYAMAVAMTGGDVSLVNTRTDLLASALETLASTGTEVTALPDGIRVRRNGGGISPADVTTDPFPGFPTDLQAQFMALMTLAKGQSRIRETIFENRFMHVQELARLGARIRLDGDLAVVEGVERLKGAPVMATDLRASVSLVIGALAAEGETQINRVYHLDRGFEALEAKLARCGAQIERVRA.

22–23 (KN) lines the phosphoenolpyruvate pocket. Residue R102 coordinates UDP-N-acetyl-alpha-D-glucosamine. Residue C126 is the Proton donor of the active site. C126 bears the 2-(S-cysteinyl)pyruvic acid O-phosphothioketal mark. Residues D316 and I338 each contribute to the UDP-N-acetyl-alpha-D-glucosamine site.

It belongs to the EPSP synthase family. MurA subfamily.

The protein resides in the cytoplasm. The catalysed reaction is phosphoenolpyruvate + UDP-N-acetyl-alpha-D-glucosamine = UDP-N-acetyl-3-O-(1-carboxyvinyl)-alpha-D-glucosamine + phosphate. It participates in cell wall biogenesis; peptidoglycan biosynthesis. Its function is as follows. Cell wall formation. Adds enolpyruvyl to UDP-N-acetylglucosamine. In Methylorubrum extorquens (strain PA1) (Methylobacterium extorquens), this protein is UDP-N-acetylglucosamine 1-carboxyvinyltransferase.